Consider the following 484-residue polypeptide: Glutathione reductase (484 aa).

FAD contacts are provided by serine 32 and glycine 33. Glutathione is bound at residue serine 32. Arginine 39 is a binding site for glutathione. Residues glutamate 52, threonine 59, cysteine 60, and lysine 68 each contribute to the FAD site. Residues cysteine 60 and cysteine 65 are joined by a disulfide bond. Tyrosine 122 contributes to the glutathione binding site. Alanine 138 provides a ligand contact to FAD. NADP(+)-binding residues include alanine 204, isoleucine 207, glutamate 210, arginine 227, and arginine 233. A glutathione-binding site is contributed by threonine 242. Glycine 293 provides a ligand contact to NADP(+). Aspartate 333 provides a ligand contact to FAD. Glutamate 339 contributes to the NADP(+) binding site. Threonine 341 is a binding site for FAD. Arginine 349 lines the glutathione pocket. NADP(+) is bound at residue valine 374. Lysine 426 contributes to the glutathione binding site. Histidine 473 serves as a coordination point for FAD. Histidine 473 (proton acceptor) is an active-site residue.

This sequence belongs to the class-I pyridine nucleotide-disulfide oxidoreductase family. Homodimer. FAD is required as a cofactor.

Its subcellular location is the cytoplasm. The protein resides in the mitochondrion. It carries out the reaction 2 glutathione + NADP(+) = glutathione disulfide + NADPH + H(+). Catalyzes the reduction of glutathione disulfide (GSSG) to reduced glutathione (GSH). Constitutes the major mechanism to maintain a high GSH:GSSG ratio in the cytosol. The polypeptide is Glutathione reductase (GLR1) (Kluyveromyces lactis (strain ATCC 8585 / CBS 2359 / DSM 70799 / NBRC 1267 / NRRL Y-1140 / WM37) (Yeast)).